The sequence spans 505 residues: Amidophosphoribosyltransferase (505 aa).

Cys-2 (nucleophile) is an active-site residue. Residues 2–236 enclose the Glutamine amidotransferase type-2 domain; the sequence is CGIVGIAGVM…PGEAIYITEE (235 aa). Residues Thr-305, Asp-367, and Asp-368 each coordinate Mg(2+).

In the C-terminal section; belongs to the purine/pyrimidine phosphoribosyltransferase family. Homotetramer. Mg(2+) is required as a cofactor.

The enzyme catalyses 5-phospho-beta-D-ribosylamine + L-glutamate + diphosphate = 5-phospho-alpha-D-ribose 1-diphosphate + L-glutamine + H2O. It participates in purine metabolism; IMP biosynthesis via de novo pathway; N(1)-(5-phospho-D-ribosyl)glycinamide from 5-phospho-alpha-D-ribose 1-diphosphate: step 1/2. Its activity is regulated as follows. Inhibited by iodoacetamide and by the glutamine analogs chloroketone and DON. In terms of biological role, catalyzes the formation of phosphoribosylamine from phosphoribosylpyrophosphate (PRPP) and glutamine. Can also use NH(3) in place of glutamine. The protein is Amidophosphoribosyltransferase of Escherichia coli (strain K12).